A 411-amino-acid polypeptide reads, in one-letter code: Putative ion-transport protein YfeO (411 aa).

Transmembrane regions (helical) follow at residues 9–29 (MLLLSLPALIIGVASSLVLIA), 54–74 (DSPFWIVGMLTLTGIVVGLII), 99–119 (ALPGLLLALIIGLAGGVSLGP), 149–169 (ILASAGTIGALFGTPVAAALI), 186–206 (LFAPLMAAAAGSLTTSLFFHP), 223–243 (IASGAIVAAIAIAAGMVAVWC), 258–278 (VLILGIGGFILGILGVIGGPL), 296–316 (LGAGDYFTLAVVKLAALVIAA), 322–342 (GGRIFPAVFIGAALGLMLHAH), 343–363 (VEAVPAAITVSCAILGLVLVV), and 386–406 (LLCIVMLPAWLLLAGKPLLAA).

It belongs to the chloride channel (TC 2.A.49) family.

The protein localises to the cell membrane. In Salmonella paratyphi A (strain ATCC 9150 / SARB42), this protein is Putative ion-transport protein YfeO.